Consider the following 181-residue polypeptide: Large ribosomal subunit protein uL16 (181 aa).

Belongs to the universal ribosomal protein uL16 family.

This is Large ribosomal subunit protein uL16 from Pyrococcus horikoshii (strain ATCC 700860 / DSM 12428 / JCM 9974 / NBRC 100139 / OT-3).